The following is a 481-amino-acid chain: MAQSAERPRPYAFMTANATRPVRTRFAPSPTGFLHLGGARTALFSWAFARHHQGVFVLRIEDTDVERSTPEAVQAILDSMDWLGMQPDEGPFYQMKRMDRYAEVLAGMLEAGTAYHCYCSPEEVDAMREAARAKGLKPRYDGTWRPEPGKTLPPVPADRKPVIRFRNPIDGATSWNDMVKGPISFDNGELDDLIIARPDGTPTYNFCVVVDDWDMGITHVLRGDDHVNNTPRQINILRALGATLPEYGHVPMILGPDGEKLSKRHGAVNVMEYDAQGYLPEAMVNYLARLGWSHGDDELFTREQLVEWFDTRHLSKSASQWDPKKLNWVNAHYIKGMDDAELAGRVAPRVERRGGKPQAADLPAIMGLLKDRAETLEQLAEDAMLFCGEYQPAPAELAAQHLTETARAALADFAARARDTEWNRAAISALIKAVLADRGLKMPQLGIPLRVAVTGRAQTPAVDAVLELLGKETVLARLQAL.

The 'HIGH' region signature appears at 28–38 (PSPTGFLHLGG). The segment covering 139-148 (RYDGTWRPEP) has biased composition (basic and acidic residues). A disordered region spans residues 139–159 (RYDGTWRPEPGKTLPPVPADR). Residues 260-264 (KLSKR) carry the 'KMSKS' region motif. Residue K263 participates in ATP binding.

This sequence belongs to the class-I aminoacyl-tRNA synthetase family. Glutamate--tRNA ligase type 1 subfamily. In terms of assembly, monomer.

It localises to the cytoplasm. The enzyme catalyses tRNA(Glu) + L-glutamate + ATP = L-glutamyl-tRNA(Glu) + AMP + diphosphate. Functionally, catalyzes the attachment of glutamate to tRNA(Glu) in a two-step reaction: glutamate is first activated by ATP to form Glu-AMP and then transferred to the acceptor end of tRNA(Glu). The sequence is that of Glutamate--tRNA ligase from Bordetella bronchiseptica (strain ATCC BAA-588 / NCTC 13252 / RB50) (Alcaligenes bronchisepticus).